Consider the following 257-residue polypeptide: MVLIRVLANLLLLQLSHAQKSSELVVGGDECNINEHRSLVFLYNSSFGCGGTLINQEWVLSAAHCDMENMRIYLGWHNFSLPNMNQKRRVAKEKFFCLSSKNYTEWDKDIMLIKMNRPVTYSTHVAPLSLPSSPPSVGSVCRIMGWGAITSPNETYPDVPHCANINILNYTVCRAAHPWLPAQSRTLCAGILQGGIDTCKGDSGGPLICNGQIQGIVSWGDNPCAQPLKPGHYTNVFDYTDWIQSIIAGNTTATCPP.

The first 18 residues, 1–18 (MVLIRVLANLLLLQLSHA), serve as a signal peptide directing secretion. Positions 19–24 (QKSSEL) are excised as a propeptide. A Peptidase S1 domain is found at 25–248 (VVGGDECNIN…YTDWIQSIIA (224 aa)). Disulfide bonds link cysteine 31–cysteine 162, cysteine 49–cysteine 65, cysteine 97–cysteine 255, cysteine 141–cysteine 209, cysteine 173–cysteine 188, and cysteine 199–cysteine 224. The N-linked (GlcNAc...) asparagine glycan is linked to asparagine 44. Histidine 64 serves as the catalytic Charge relay system. N-linked (GlcNAc...) asparagine glycosylation is found at asparagine 78 and asparagine 102. The active-site Charge relay system is the aspartate 109. Asparagine 153 and asparagine 169 each carry an N-linked (GlcNAc...) asparagine glycan. The active-site Charge relay system is the serine 203. The N-linked (GlcNAc...) asparagine glycan is linked to asparagine 250.

As to quaternary structure, monomer. In terms of processing, glycosylated. Contains 23.0% of hexoses, 8.3% of hexosamines and 1.0% of sialic acids. Expressed by the venom gland.

It is found in the secreted. Its activity is regulated as follows. Inhibited by diisopropylfluorophosphate (DFP) and PMSF. Its function is as follows. Snake venom serine protease that has fibrinogenolytic activities by hydrolyzing the beta chain of fibrinogen (FGB). Typical arginine esterase which hydrolyzes esters and amides of arginine. In Macrovipera lebetinus (Levantine viper), this protein is Beta-fibrinogenase.